The sequence spans 245 residues: Chymotrypsinogen A (245 aa).

5 disulfides stabilise this stretch: C1–C122, C42–C58, C136–C201, C168–C182, and C191–C220. Positions 14-15 are excised as a propeptide; sequence SR. The Peptidase S1 domain maps to 16 to 243; sequence IVNGEEAVPG…LVNWVQQTLA (228 aa). Active-site charge relay system residues include H57 and D102. Positions 147-148 are excised as a propeptide; it reads TN. S195 functions as the Charge relay system in the catalytic mechanism.

This sequence belongs to the peptidase S1 family.

The protein localises to the secreted. It localises to the extracellular space. The catalysed reaction is Preferential cleavage: Tyr-|-Xaa, Trp-|-Xaa, Phe-|-Xaa, Leu-|-Xaa.. This Bos taurus (Bovine) protein is Chymotrypsinogen A.